Here is a 20-residue protein sequence, read N- to C-terminus: MGSLESERFVVDVAASNLDK.

The protein belongs to the zinc-containing alcohol dehydrogenase family. Requires Zn(2+) as cofactor.

The enzyme catalyses (E)-cinnamyl alcohol + NADP(+) = (E)-cinnamaldehyde + NADPH + H(+). The catalysed reaction is (E)-coniferol + NADP(+) = (E)-coniferaldehyde + NADPH + H(+). It catalyses the reaction (E)-sinapyl alcohol + NADP(+) = (E)-sinapaldehyde + NADPH + H(+). It carries out the reaction (E)-4-coumaroyl alcohol + NADP(+) = (E)-4-coumaraldehyde + NADPH + H(+). The enzyme catalyses (E)-caffeyl alcohol + NADP(+) = (E)-caffeyl aldehyde + NADPH + H(+). Its pathway is aromatic compound metabolism; phenylpropanoid biosynthesis. Involved in lignin biosynthesis. Catalyzes the final step specific for the production of lignin monomers, like coniferyl alcohol, sinapyl alcohol and 4-coumaryl alcohol. This chain is Probable cinnamyl alcohol dehydrogenase 1, found in Pseudotsuga menziesii (Douglas-fir).